The primary structure comprises 211 residues: Protein FAM167A (211 aa).

Disordered regions lie at residues 1–30 (MSVP…DHLR) and 56–108 (EEQT…GKLE). Residues 120-153 (LRKELMEMRLQDQQLARQLMRLRSDIHKLKIEQT) adopt a coiled-coil conformation.

Belongs to the FAM167 (SEC) family.

This chain is Protein FAM167A (FAM167A), found in Bos taurus (Bovine).